The sequence spans 259 residues: Proteasome assembly chaperone 2 (259 aa).

Belongs to the PSMG2 family. In terms of assembly, forms a heterodimer with psmg1. Post-translationally, degraded by the proteasome upon completion of 20S proteasome maturation.

The protein localises to the nucleus. Its function is as follows. Chaperone protein which promotes assembly of the 20S proteasome as part of a heterodimer with psmg1. In Xenopus laevis (African clawed frog), this protein is Proteasome assembly chaperone 2.